A 377-amino-acid polypeptide reads, in one-letter code: Killer cell immunoglobulin-like receptor 2DL4 (377 aa).

Positions 1–21 are cleaved as a signal peptide; the sequence is MSMSPTVIILACLGFFLDQSV. The Extracellular segment spans residues 22-242; that stretch reads WAHVGGQDKP…FKTGIARHLH (221 aa). Ig-like C2-type domains follow at residues 44–104 and 139–202; these read GGHV…HPHS and GENV…FHGS. A disulfide bond links Cys51 and Cys97. Residues Asn141 and Asn175 are each glycosylated (N-linked (GlcNAc...) asparagine). A disulfide bridge links Cys146 with Cys195. Residues 243–263 traverse the membrane as a helical segment; that stretch reads AVIRYSVAIILFTILPFFLLH. Residues 264–377 are Cytoplasmic-facing; the sequence is RWCSKKKDAA…ASSNVPAAGI (114 aa). The tract at residues 338–377 is disordered; sequence PRALSPAHEHHSQALMGSSRETTALSQTQLASSNVPAAGI. A compositionally biased stretch (polar residues) spans 352-377; the sequence is LMGSSRETTALSQTQLASSNVPAAGI.

Belongs to the immunoglobulin superfamily. In terms of assembly, interacts with peptide-bound HLA-G-B2M heterotrimeric complex. Interacts with ARRB2. Expressed in decidual NK cells and innate lymphoid cell type I (ILC1). Expressed in a subset of peripheral NK cells.

Its subcellular location is the cell membrane. It localises to the early endosome membrane. Its function is as follows. Receptor for non-classical major histocompatibility class Ib HLA-G molecules. Recognizes HLA-G in complex with B2M/beta-2 microglobulin and a nonamer self-peptide (peptide-bound HLA-G-B2M). In decidual NK cells, binds peptide-bound HLA-G-B2M complex and triggers NK cell senescence-associated secretory phenotype as a molecular switch to promote vascular remodeling and fetal growth in early pregnancy. May play a role in balancing tolerance and antiviral-immunity at maternal-fetal interface by keeping in check the effector functions of NK, CD8+ T cells and B cells. Upon interaction with peptide-bound HLA-G-B2M, initiates signaling from the endosomal compartment leading to downstream activation of PRKDC-XRCC5 and AKT1, and ultimately triggering NF-kappa-B-dependent pro-inflammatory response. This Homo sapiens (Human) protein is Killer cell immunoglobulin-like receptor 2DL4.